A 414-amino-acid polypeptide reads, in one-letter code: ORC1-type DNA replication protein 11 (414 aa).

Residues 60–64 (VGKTA), Tyr-207, and Arg-219 each bind ATP.

It belongs to the CDC6/cdc18 family.

Involved in regulation of DNA replication. This chain is ORC1-type DNA replication protein 11 (cdc6k), found in Haloarcula marismortui (strain ATCC 43049 / DSM 3752 / JCM 8966 / VKM B-1809) (Halobacterium marismortui).